We begin with the raw amino-acid sequence, 312 residues long: Glyoxylate/hydroxypyruvate reductase A (312 aa).

The active site involves Arg-227. His-275 serves as the catalytic Proton donor.

The protein belongs to the D-isomer specific 2-hydroxyacid dehydrogenase family. GhrA subfamily.

The protein localises to the cytoplasm. The catalysed reaction is glycolate + NADP(+) = glyoxylate + NADPH + H(+). It carries out the reaction (R)-glycerate + NAD(+) = 3-hydroxypyruvate + NADH + H(+). It catalyses the reaction (R)-glycerate + NADP(+) = 3-hydroxypyruvate + NADPH + H(+). Functionally, catalyzes the NADPH-dependent reduction of glyoxylate and hydroxypyruvate into glycolate and glycerate, respectively. The polypeptide is Glyoxylate/hydroxypyruvate reductase A (Shigella dysenteriae serotype 1 (strain Sd197)).